The primary structure comprises 232 residues: Orotidine 5'-phosphate decarboxylase (232 aa).

Substrate contacts are provided by residues aspartate 13, lysine 35, 62-71, threonine 122, arginine 182, glutamine 191, glycine 211, and arginine 212; that span reads DLKFHDIPNT. Lysine 64 (proton donor) is an active-site residue.

Belongs to the OMP decarboxylase family. Type 1 subfamily. Homodimer.

It carries out the reaction orotidine 5'-phosphate + H(+) = UMP + CO2. Its pathway is pyrimidine metabolism; UMP biosynthesis via de novo pathway; UMP from orotate: step 2/2. In terms of biological role, catalyzes the decarboxylation of orotidine 5'-monophosphate (OMP) to uridine 5'-monophosphate (UMP). The polypeptide is Orotidine 5'-phosphate decarboxylase (Pseudomonas aeruginosa (strain LESB58)).